We begin with the raw amino-acid sequence, 164 residues long: 3-isopropylmalate dehydratase small subunit 1 (164 aa).

It belongs to the LeuD family. LeuD type 2 subfamily. As to quaternary structure, heterodimer of LeuC and LeuD.

The enzyme catalyses (2R,3S)-3-isopropylmalate = (2S)-2-isopropylmalate. It participates in amino-acid biosynthesis; L-leucine biosynthesis; L-leucine from 3-methyl-2-oxobutanoate: step 2/4. Functionally, catalyzes the isomerization between 2-isopropylmalate and 3-isopropylmalate, via the formation of 2-isopropylmaleate. This is 3-isopropylmalate dehydratase small subunit 1 (leuD1) from Pyrococcus abyssi (strain GE5 / Orsay).